We begin with the raw amino-acid sequence, 666 residues long: Probable cytochrome c oxidase subunit 1 (666 aa).

2 helical membrane passes run 16-36 and 57-77; these read IPLI…VWVV and IGVM…SDAI. A heme b-binding site is contributed by H105. 13 consecutive transmembrane segments (helical) span residues 108–128, 142–162, 192–212, 234–254, 277–297, 315–335, 346–366, 380–400, 413–433, 456–476, 493–513, 591–611, and 612–632; these read IMIF…VVPL, SVGF…LVIG, SLQI…TTVL, SNLL…MLLL, LIWA…FGIF, MVLA…HHFF, IFGI…YNWL, MLWA…GVLV, MFLV…GAFA, FWFT…AGML, WMLV…CQIM, SPTG…LIWH, and IWWM…VFAW. Cu cation is bound by residues H283, Y287, H332, and H333. Positions 283 to 287 form a cross-link, 1'-histidyl-3'-tyrosine (His-Tyr); it reads HPEVY. Heme b is bound by residues H418 and H420.

This sequence belongs to the heme-copper respiratory oxidase family.

It localises to the cell membrane. It carries out the reaction 4 Fe(II)-[cytochrome c] + O2 + 8 H(+)(in) = 4 Fe(III)-[cytochrome c] + 2 H2O + 4 H(+)(out). The protein operates within energy metabolism; oxidative phosphorylation. The protein is Probable cytochrome c oxidase subunit 1 of Bradyrhizobium diazoefficiens (strain JCM 10833 / BCRC 13528 / IAM 13628 / NBRC 14792 / USDA 110).